We begin with the raw amino-acid sequence, 112 residues long: Nucleoid-associated protein RER_03900 (112 aa).

It belongs to the YbaB/EbfC family. In terms of assembly, homodimer.

The protein resides in the cytoplasm. The protein localises to the nucleoid. Binds to DNA and alters its conformation. May be involved in regulation of gene expression, nucleoid organization and DNA protection. The sequence is that of Nucleoid-associated protein RER_03900 from Rhodococcus erythropolis (strain PR4 / NBRC 100887).